Consider the following 302-residue polypeptide: UPF0725 protein At1g23960 (302 aa).

Ala-2 carries the post-translational modification N-acetylalanine.

The protein belongs to the UPF0725 (EMB2204) family.

This Arabidopsis thaliana (Mouse-ear cress) protein is UPF0725 protein At1g23960.